Here is a 485-residue protein sequence, read N- to C-terminus: MTVRVRLAPSPTGNLHIGTARTAVFNWLYARHRGGKFILRIEDTDRERSRPEYTENILEGLQWLGLTWDEGPYFQSDRLDLYRQAIQTLLDKGLAYYCYCTPEELEALRAEQKAKGQAPRYDNRHRHLTPEEQAAFEAAGRTPVIRFKIEDDRQIEWQDLVRGRVSWQGADLGGDMVIARAAPRGEIGYPLYNLVVVVDDIAMGITDVIRGEDHIGNTPKQILLYEALGATPPNFAHTPLILNSTGQKLSKRDGVTSISDFRAMGYLAPALANYMTLLGWSPPEGVGELFTLDLAAKHFSFERINKAGARFDWDKLNWLNRQYIQQLEPEEFLAELIPLWQGAGYAFDEERDRPWLFDLAQLLQPGLNTLREAIDQGAVFFIPSVTFDSEAMAQLGQPQSATILAYLLEHLPAEPALTVAMGQQLIQQAAKAAGVKKGATMRTLRAALTGAVHGPDLMAAWQILHQRGWDEPRLAAALKQAQTTS.

Arg6 contacts L-glutamate. The 'HIGH' region signature appears at 9–19 (PSPTGNLHIGT). Residues Tyr192 and 210–214 (RGEDH) each bind L-glutamate. A 'KMSKS' region motif is present at residues 248–252 (KLSKR). Lys251 serves as a coordination point for ATP.

Belongs to the class-I aminoacyl-tRNA synthetase family. Glutamate--tRNA ligase type 1 subfamily. As to quaternary structure, monomer. It depends on Does not require zinc. as a cofactor.

Its subcellular location is the cytoplasm. The enzyme catalyses tRNA(Glu) + L-glutamate + ATP = L-glutamyl-tRNA(Glu) + AMP + diphosphate. Its function is as follows. Non-discriminating glutamyl-tRNA synthetase. Catalyzes the attachment of glutamate to tRNA(Glu) in a two-step reaction: glutamate is first activated by ATP to form Glu-AMP and then transferred to the acceptor end of tRNA(Glu). Acylates both tRNA(Glu) and tRNA(Gln) with glutamate, but has 13-fold higher efficiency with tRNA(Glu). The protein is Glutamate--tRNA ligase (gltX) of Thermosynechococcus vestitus (strain NIES-2133 / IAM M-273 / BP-1).